Reading from the N-terminus, the 425-residue chain is Protein cab-1 (425 aa).

Positions 1–11 (MRYTFSDEKKA) are enriched in basic and acidic residues. Disordered regions lie at residues 1-20 (MRYT…SRAK) and 214-251 (LKKT…VPQK). An AEX-3-binding region spans residues 205 to 424 (ENEIAKESEL…EVCNPNFAAQ (220 aa)). Residues 300-320 (LLLLAVGTVMCVGLIGTVAGG) form a helical membrane-spanning segment. The tract at residues 334–355 (DDGEYAPYAGTGPGFRKNKGNK) is disordered.

This sequence belongs to the NPDC1/cab-1 family. Binds to the RAB3 GDP/GTP exchange factor aex-3. Expressed in a variety of neurons.

It localises to the membrane. This is Protein cab-1 (cab-1) from Caenorhabditis elegans.